The following is a 106-amino-acid chain: Nucleoid-associated protein Nham_0463 (106 aa).

The protein belongs to the YbaB/EbfC family. As to quaternary structure, homodimer.

The protein localises to the cytoplasm. It is found in the nucleoid. Binds to DNA and alters its conformation. May be involved in regulation of gene expression, nucleoid organization and DNA protection. The sequence is that of Nucleoid-associated protein Nham_0463 from Nitrobacter hamburgensis (strain DSM 10229 / NCIMB 13809 / X14).